The chain runs to 406 residues: 2,3-bisphosphoglycerate-independent phosphoglycerate mutase (406 aa).

The interval 156–183 (NLSDKISDSDPHSEGKPPEPIRPLDPSA) is disordered. Basic and acidic residues predominate over residues 160–174 (KISDSDPHSEGKPPE).

Belongs to the BPG-independent phosphoglycerate mutase family. A-PGAM subfamily.

The catalysed reaction is (2R)-2-phosphoglycerate = (2R)-3-phosphoglycerate. It participates in carbohydrate degradation; glycolysis; pyruvate from D-glyceraldehyde 3-phosphate: step 3/5. Its function is as follows. Catalyzes the interconversion of 2-phosphoglycerate and 3-phosphoglycerate. In Thermoplasma volcanium (strain ATCC 51530 / DSM 4299 / JCM 9571 / NBRC 15438 / GSS1), this protein is 2,3-bisphosphoglycerate-independent phosphoglycerate mutase.